The primary structure comprises 763 residues: Exo-1,4-beta-xylosidase bxlB (763 aa).

Positions 1 to 23 are cleaved as a signal peptide; that stretch reads MAVFKSWNLALLSSLFIPALCQS. Residue asparagine 63 is glycosylated (N-linked (GlcNAc...) asparagine). Aspartate 288 is a catalytic residue. N-linked (GlcNAc...) asparagine glycans are attached at residues asparagine 340, asparagine 408, asparagine 419, asparagine 458, asparagine 621, and asparagine 760.

It belongs to the glycosyl hydrolase 3 family.

The protein resides in the secreted. The enzyme catalyses Hydrolysis of (1-&gt;4)-beta-D-xylans, to remove successive D-xylose residues from the non-reducing termini.. It functions in the pathway glycan degradation; xylan degradation. Its function is as follows. Xylan 1,4-beta-xylosidase involved in the hydrolysis of xylan, a major structural heterogeneous polysaccharide found in plant biomass representing the second most abundant polysaccharide in the biosphere, after cellulose. Active against rye arabinoxylan and xylohexaose, but not paranitrophenyl-beta-xyloside. This Emericella nidulans (strain FGSC A4 / ATCC 38163 / CBS 112.46 / NRRL 194 / M139) (Aspergillus nidulans) protein is Exo-1,4-beta-xylosidase bxlB (bxlB).